The primary structure comprises 198 residues: Elongation factor Ts (198 aa).

The interval 81–84 is involved in Mg(2+) ion dislocation from EF-Tu; sequence TDFV.

Belongs to the EF-Ts family.

Its subcellular location is the cytoplasm. Associates with the EF-Tu.GDP complex and induces the exchange of GDP to GTP. It remains bound to the aminoacyl-tRNA.EF-Tu.GTP complex up to the GTP hydrolysis stage on the ribosome. This chain is Elongation factor Ts, found in Dictyoglomus thermophilum (strain ATCC 35947 / DSM 3960 / H-6-12).